The primary structure comprises 453 residues: Anthocyanidin 3-O-glucosyltransferase (453 aa).

The Proton acceptor role is filled by His17. His17 lines the an anthocyanidin pocket. Residue Asp117 is the Charge relay of the active site. A UDP-alpha-D-glucose-binding site is contributed by Thr139. Residue His148 participates in an anthocyanidin binding. Ala331, Gln333, His348, Trp351, Asn352, Ser353, and Glu356 together coordinate UDP-alpha-D-glucose. An an anthocyanidin-binding site is contributed by Gly371. Residues Asp372 and Gln373 each contribute to the UDP-alpha-D-glucose site.

Belongs to the UDP-glycosyltransferase family.

The catalysed reaction is an anthocyanidin + UDP-alpha-D-glucose + H(+) = an anthocyanidin 3-O-beta-D-glucoside + UDP. It carries out the reaction delphinidin + UDP-alpha-D-glucose = delphinidin 3-O-beta-D-glucoside + UDP. It catalyses the reaction pelargonidin + UDP-alpha-D-glucose = pelargonidin 3-O-beta-D-glucoside + UDP. The enzyme catalyses cyanidin + UDP-alpha-D-glucose = cyanidin 3-O-beta-D-glucoside + UDP + H(+). It participates in pigment biosynthesis; anthocyanin biosynthesis. In the presence of other necessary color factors, this glycosylation reaction allows the accumulation of anthocyanin pigments. Anthocyanidins are the preferred substrates, while flavonols are only a minor substrate in vitro. This Gentiana triflora (Clustered gentian) protein is Anthocyanidin 3-O-glucosyltransferase.